The sequence spans 666 residues: Galactocerebrosidase (666 aa).

The first 22 residues, 1 to 22, serve as a signal peptide directing secretion; the sequence is MIYKLYFAIALCFSLCFDLCIA. Substrate is bound at residue threonine 91. Asparagine 125 is a glycosylation site (N-linked (GlcNAc...) asparagine). Residues tryptophan 133 and asparagine 179 each contribute to the substrate site. The Proton donor/acceptor role is filled by glutamate 180. Catalysis depends on glutamate 256, which acts as the Nucleophile. Residues cysteine 269 and cysteine 376 are joined by a disulfide bond. N-linked (GlcNAc...) asparagine glycosylation occurs at asparagine 361. Arginine 378 is a binding site for substrate. Residues asparagine 385, asparagine 390, asparagine 500, and asparagine 540 are each glycosylated (N-linked (GlcNAc...) asparagine).

Belongs to the glycosyl hydrolase 59 family.

It is found in the lysosome. The enzyme catalyses a beta-D-galactosyl-(1&lt;-&gt;1')-N-acylsphing-4-enine + H2O = an N-acylsphing-4-enine + D-galactose. The catalysed reaction is beta-D-galactosyl-(1&lt;-&gt;1)-sphing-4-enine + H2O = sphing-4-enine + D-galactose. It catalyses the reaction a D-galactosylceramide + H2O = an N-acyl-sphingoid base + D-galactose. In terms of biological role, hydrolyzes the galactose ester bonds of glycolipids such as galactosylceramide and galactosylsphingosine. This chain is Galactocerebrosidase, found in Salmo salar (Atlantic salmon).